The sequence spans 111 residues: Cell cycle protein GpsB (111 aa).

Positions 38 to 72 form a coiled coil; the sequence is IKDYEAFHKEFEQLKQQNARLKRELEEQKLAATQV.

This sequence belongs to the GpsB family. In terms of assembly, forms polymers through the coiled coil domains. Interacts with PBP1, MreC and EzrA.

It localises to the cytoplasm. In terms of biological role, divisome component that associates with the complex late in its assembly, after the Z-ring is formed, and is dependent on DivIC and PBP2B for its recruitment to the divisome. Together with EzrA, is a key component of the system that regulates PBP1 localization during cell cycle progression. Its main role could be the removal of PBP1 from the cell pole after pole maturation is completed. Also contributes to the recruitment of PBP1 to the division complex. Not essential for septum formation. The polypeptide is Cell cycle protein GpsB (Bacillus cereus (strain ATCC 10987 / NRS 248)).